Consider the following 153-residue polypeptide: Arginine repressor (153 aa).

Belongs to the ArgR family.

Its subcellular location is the cytoplasm. Its pathway is amino-acid biosynthesis; L-arginine biosynthesis [regulation]. Regulates arginine biosynthesis genes. This Syntrophomonas wolfei subsp. wolfei (strain DSM 2245B / Goettingen) protein is Arginine repressor.